The sequence spans 118 residues: Basic phospholipase A2 PA-15 (118 aa).

Disulfide bonds link Cys-11–Cys-71, Cys-27–Cys-117, Cys-29–Cys-45, Cys-44–Cys-98, Cys-51–Cys-91, Cys-60–Cys-84, and Cys-78–Cys-89. Ca(2+) contacts are provided by Tyr-28, Gly-30, and Gly-32. His-48 is a catalytic residue. A Ca(2+)-binding site is contributed by Asp-49. The active site involves Asp-92.

This sequence belongs to the phospholipase A2 family. Group I subfamily. D49 sub-subfamily. It depends on Ca(2+) as a cofactor. In terms of tissue distribution, expressed by the venom gland.

The protein localises to the secreted. It catalyses the reaction a 1,2-diacyl-sn-glycero-3-phosphocholine + H2O = a 1-acyl-sn-glycero-3-phosphocholine + a fatty acid + H(+). In terms of biological role, PLA2 catalyzes the calcium-dependent hydrolysis of the 2-acyl groups in 3-sn-phosphoglycerides. The chain is Basic phospholipase A2 PA-15 from Pseudechis australis (Mulga snake).